We begin with the raw amino-acid sequence, 426 residues long: SrfA-induced gene K protein (426 aa).

Positions methionine 1 to serine 23 are cleaved as a signal peptide. Residues asparagine 64, asparagine 136, asparagine 160, and asparagine 226 are each glycosylated (N-linked (GlcNAc...) asparagine). Laminin EGF-like domains are found at residues aspartate 325–leucine 348 and cysteine 384–valine 408. 3 disulfide bridges follow: cysteine 330–cysteine 339, cysteine 342–cysteine 358, and cysteine 370–cysteine 388. N-linked (GlcNAc...) asparagine glycosylation is present at asparagine 385.

The protein is SrfA-induced gene K protein (sigK) of Dictyostelium discoideum (Social amoeba).